The following is an 874-amino-acid chain: Probable inorganic carbon transporter subunit DabA (874 aa).

Positions 398, 400, 580, and 595 each coordinate Zn(2+).

It belongs to the inorganic carbon transporter (TC 9.A.2) DabA family. Forms a complex with DabB. The cofactor is Zn(2+).

It localises to the cell membrane. In terms of biological role, part of an energy-coupled inorganic carbon pump. This is Probable inorganic carbon transporter subunit DabA from Bacillus cereus (strain Q1).